Reading from the N-terminus, the 95-residue chain is Large ribosomal subunit protein bL21 (95 aa).

It belongs to the bacterial ribosomal protein bL21 family. As to quaternary structure, part of the 50S ribosomal subunit. Contacts protein L20.

In terms of biological role, this protein binds to 23S rRNA in the presence of protein L20. The protein is Large ribosomal subunit protein bL21 of Prosthecochloris vibrioformis (Chlorobium vibrioforme).